Reading from the N-terminus, the 151-residue chain is Large ribosomal subunit protein bL9 (151 aa).

The protein belongs to the bacterial ribosomal protein bL9 family.

Functionally, binds to the 23S rRNA. The polypeptide is Large ribosomal subunit protein bL9 (Prochlorococcus marinus (strain MIT 9215)).